The sequence spans 158 residues: 6,7-dimethyl-8-ribityllumazine synthase (158 aa).

5-amino-6-(D-ribitylamino)uracil contacts are provided by residues F23, 57-59, and 81-83; these read AFE and TVI. A (2S)-2-hydroxy-3-oxobutyl phosphate-binding site is contributed by 86-87; it reads GT. The active-site Proton donor is the H89. F114 contacts 5-amino-6-(D-ribitylamino)uracil. R128 is a (2S)-2-hydroxy-3-oxobutyl phosphate binding site.

It belongs to the DMRL synthase family.

The catalysed reaction is (2S)-2-hydroxy-3-oxobutyl phosphate + 5-amino-6-(D-ribitylamino)uracil = 6,7-dimethyl-8-(1-D-ribityl)lumazine + phosphate + 2 H2O + H(+). Its pathway is cofactor biosynthesis; riboflavin biosynthesis; riboflavin from 2-hydroxy-3-oxobutyl phosphate and 5-amino-6-(D-ribitylamino)uracil: step 1/2. Its function is as follows. Catalyzes the formation of 6,7-dimethyl-8-ribityllumazine by condensation of 5-amino-6-(D-ribitylamino)uracil with 3,4-dihydroxy-2-butanone 4-phosphate. This is the penultimate step in the biosynthesis of riboflavin. This is 6,7-dimethyl-8-ribityllumazine synthase from Desulforudis audaxviator (strain MP104C).